The sequence spans 564 residues: Zyxin (564 aa).

Residue Ala2 is modified to N-acetylalanine. The disordered stretch occupies residues 30-141 (VAPKPKVNPF…TQLPPQPREK (112 aa)). 2 stretches are compositionally biased toward pro residues: residues 63 to 78 (IPPPPPEDFPLPPPPL) and 93 to 109 (FPPPPPPMIEEPFPPAP). A phosphoserine mark is found at Ser117, Ser144, Ser170, and Ser171. A disordered region spans residues 162–344 (NDPFKARVSS…RSPGGPGPLT (183 aa)). 2 stretches are compositionally biased toward pro residues: residues 174–189 (VPPPVATPFVPKPSTK) and 197–214 (PLPPWKTPSSSQPPPQPQ). Thr180 carries the post-translational modification Phosphothreonine. Residues 234 to 243 (QPVSSANTQP) are compositionally biased toward polar residues. An Asymmetric dimethylarginine modification is found at Arg244. Positions 255–275 (PKFAPVAPKFTPVVSKFSPGA) are enriched in low complexity. 2 positions are modified to N6-acetyllysine: Lys256 and Lys263. Position 265 is a phosphothreonine (Thr265). N6-acetyllysine is present on Lys270. Phosphoserine is present on residues Ser272 and Ser300. Positions 294-310 (SSVSTGSPQPPSFTYAQ) are enriched in polar residues. Residues 311–322 (QKEKPLVQEKQH) are compositionally biased toward basic and acidic residues. A Phosphoserine modification is found at Ser336. 3 LIM zinc-binding domains span residues 376–435 (CGKC…TLEK), 436–495 (CNTC…YAPR), and 496–562 (CSVC…SARA).

The protein belongs to the zyxin/ajuba family. In terms of assembly, interacts, via the Pro-rich regions, with the EVH1 domains of ENAH, EVL and VASP. Interacts with the first LIM domain of TES. Interacts with SYNPO2.

The protein resides in the cytoplasm. The protein localises to the cytoskeleton. Its subcellular location is the cell junction. It is found in the focal adhesion. It localises to the nucleus. Adhesion plaque protein. Binds alpha-actinin and the CRP protein. Important for targeting TES and ENA/VASP family members to focal adhesions and for the formation of actin-rich structures. May be a component of a signal transduction pathway that mediates adhesion-stimulated changes in gene expression. This is Zyxin (Zyx) from Mus musculus (Mouse).